Reading from the N-terminus, the 178-residue chain is MISIYLFMAFFIANLLGYGGGPASIPLMFEEVVNRYSWLSNDQFSNMLALANALPGPIATKIAAYVGYSAGGWPGFLIALIATVVPSALALIVLLRIIQRFRQSPVIKGMTLSVQPVIAVMMLILTWQIGADGIKAIGWVQSIVITGISLLAMTKFKMHPAFLIIAAFLYGGLVIPYL.

Helical transmembrane passes span 1–21 (MISI…YGGG), 47–67 (MLAL…AYVG), 75–95 (GFLI…IVLL), 117–137 (VIAV…IKAI), and 158–178 (MHPA…IPYL).

This sequence belongs to the chromate ion transporter (CHR) (TC 2.A.51) family.

It localises to the cell membrane. This is an uncharacterized protein from Bacillus subtilis (strain 168).